The sequence spans 269 residues: Eukaryotic translation initiation factor 3 subunit G-1 (269 aa).

The 79-residue stretch at 188-266 folds into the RRM domain; sequence AAIRISNLSE…LILSVEWSKP (79 aa).

It belongs to the eIF-3 subunit G family. As to quaternary structure, component of the eukaryotic translation initiation factor 3 (eIF-3) complex. The eIF-3 complex interacts with pix.

The protein localises to the cytoplasm. Its function is as follows. RNA-binding component of the eukaryotic translation initiation factor 3 (eIF-3) complex, which is involved in protein synthesis of a specialized repertoire of mRNAs and, together with other initiation factors, stimulates binding of mRNA and methionyl-tRNAi to the 40S ribosome. The eIF-3 complex specifically targets and initiates translation of a subset of mRNAs involved in cell proliferation. This subunit can bind 18S rRNA. The sequence is that of Eukaryotic translation initiation factor 3 subunit G-1 from Drosophila persimilis (Fruit fly).